A 222-amino-acid chain; its full sequence is UPF0502 protein Shewmr7_1629 (222 aa).

This sequence belongs to the UPF0502 family.

In Shewanella sp. (strain MR-7), this protein is UPF0502 protein Shewmr7_1629.